The sequence spans 510 residues: ATP synthase subunit alpha, chloroplastic (510 aa).

An ATP-binding site is contributed by 170–177; the sequence is GDRQTGKT.

The protein belongs to the ATPase alpha/beta chains family. In terms of assembly, F-type ATPases have 2 components, CF(1) - the catalytic core - and CF(0) - the membrane proton channel. CF(1) has five subunits: alpha(3), beta(3), gamma(1), delta(1), epsilon(1). CF(0) has four main subunits: a, b, b' and c.

It is found in the plastid. It localises to the chloroplast thylakoid membrane. The enzyme catalyses ATP + H2O + 4 H(+)(in) = ADP + phosphate + 5 H(+)(out). Functionally, produces ATP from ADP in the presence of a proton gradient across the membrane. The alpha chain is a regulatory subunit. The polypeptide is ATP synthase subunit alpha, chloroplastic (Phaseolus vulgaris (Kidney bean)).